A 101-amino-acid chain; its full sequence is Small ribosomal subunit protein uS14 (101 aa).

The protein belongs to the universal ribosomal protein uS14 family. In terms of assembly, part of the 30S ribosomal subunit. Contacts proteins S3 and S10.

Functionally, binds 16S rRNA, required for the assembly of 30S particles and may also be responsible for determining the conformation of the 16S rRNA at the A site. This chain is Small ribosomal subunit protein uS14, found in Arthrobacter sp. (strain FB24).